The following is a 794-amino-acid chain: Cadherin-12 (794 aa).

Residues 1–23 (MLTRNCLSLLLWVLFDGGLLTPL) form the signal peptide. The propeptide occupies 24–54 (QPQPQQTLATEPRENVIHLPGQRSHFQRVKR). Cadherin domains follow at residues 55 to 160 (GWVW…EPKF), 161 to 269 (LDGP…PPRF), 270 to 384 (PKSI…PPVF), 385 to 487 (SKPL…EFPP), and 488 to 609 (EISV…IFLP). The Extracellular portion of the chain corresponds to 55–609 (GWVWNQFFVL…SCNVEAIFLP (555 aa)). Asn-256 is a glycosylation site (N-linked (GlcNAc...) asparagine). N-linked (GlcNAc...) asparagine glycosylation is found at Asn-456, Asn-537, and Asn-545. A helical transmembrane segment spans residues 610-637 (VGLSTGALIAILLCIVILLAIVVLYVAL). Residues 638 to 794 (RRQKKKDTLM…EESYNPDKVT (157 aa)) are Cytoplasmic-facing. Ser-787 is subject to Phosphoserine.

As to expression, brain.

It localises to the cell membrane. Its function is as follows. Cadherins are calcium-dependent cell adhesion proteins. They preferentially interact with themselves in a homophilic manner in connecting cells; cadherins may thus contribute to the sorting of heterogeneous cell types. This chain is Cadherin-12 (CDH12), found in Homo sapiens (Human).